We begin with the raw amino-acid sequence, 36 residues long: Beta-amanitin proprotein (36 aa).

A propeptide spanning residues 1–10 is cleaved from the precursor; that stretch reads MSDINATRLP. A cross-link (cyclopeptide (Ile-Pro)) is located at residues 11–18; that stretch reads IWGIGCDP. The segment at residues 12–16 is a cross-link (2'-cysteinyl-6'-hydroxytryptophan sulfoxide (Trp-Cys)); sequence WGIGC. Residues 19-36 constitute a propeptide that is removed on maturation; it reads CIGDDVTALLTRGEASLC.

The protein belongs to the MSDIN fungal toxin family. Processed by the macrocyclase-peptidase enzyme POPB to yield a toxic cyclic decapeptide. POPB first removes 10 residues from the N-terminus. Conformational trapping of the remaining peptide forces the enzyme to release this intermediate rather than proceed to macrocyclization. The enzyme rebinds the remaining peptide in a different conformation and catalyzes macrocyclization of the N-terminal 8 residues.

Its function is as follows. Toxin belonging to the bicyclic octapeptides amatoxins that acts by binding non-competitively to RNA polymerase II and greatly slowing the elongation of transcripts from target promoters. This is Beta-amanitin proprotein from Amanita phalloides (Death cap).